Consider the following 403-residue polypeptide: Dynactin subunit 2-A (403 aa).

The tract at residues 1–26 (MADPKYADLPGIARNEPDVYETSDLP) is disordered. Positions 99 to 132 (PQQKYQRLLHEVQELTQEVEKTQSTVKESAAEEK) form a coiled coil. Residues 183–203 (AAKTRKNPEGKSPAKGPGPDT) form a disordered region. A coiled-coil region spans residues 381-401 (KENLATVEDNFSNIDGRIKKL).

The protein belongs to the dynactin subunit 2 family. Subunit of dynactin, a multiprotein complex part of a tripartite complex with dynein and a adapter, such as BICDL1, BICD2 or HOOK3. The dynactin complex is built around ACTR1A/ACTB filament and consists of an actin-related filament composed of a shoulder domain, a pointed end and a barbed end. Its length is defined by its flexible shoulder domain. The soulder is composed of 2 DCTN1 subunits, 4 DCTN2 and 2 DCTN3.

It localises to the cytoplasm. Its subcellular location is the cytoskeleton. It is found in the microtubule organizing center. The protein resides in the centrosome. The protein localises to the membrane. In terms of biological role, part of the dynactin complex that activates the molecular motor dynein for ultra-processive transport along microtubules. In the dynactin soulder domain, binds the ACTR1A filament and acts as a molecular ruler to determine the length. Modulates cytoplasmic dynein binding to an organelle, and plays a role in prometaphase chromosome alignment and spindle organization during mitosis. Involved in anchoring microtubules to centrosomes. In Xenopus laevis (African clawed frog), this protein is Dynactin subunit 2-A (dctn2-a).